The sequence spans 473 residues: Bifunctional protein HldE (473 aa).

A ribokinase region spans residues 1–317; it reads MKLSMPRFDQ…RRAIQREEGS (317 aa). ATP is bound at residue 194 to 197; it reads NLSE. D263 is an active-site residue. Residues 343–473 are cytidylyltransferase; that stretch reads FTNGCFDILH…TAIVEKIRKN (131 aa).

In the N-terminal section; belongs to the carbohydrate kinase PfkB family. This sequence in the C-terminal section; belongs to the cytidylyltransferase family. Homodimer.

It carries out the reaction D-glycero-beta-D-manno-heptose 7-phosphate + ATP = D-glycero-beta-D-manno-heptose 1,7-bisphosphate + ADP + H(+). The catalysed reaction is D-glycero-beta-D-manno-heptose 1-phosphate + ATP + H(+) = ADP-D-glycero-beta-D-manno-heptose + diphosphate. It participates in nucleotide-sugar biosynthesis; ADP-L-glycero-beta-D-manno-heptose biosynthesis; ADP-L-glycero-beta-D-manno-heptose from D-glycero-beta-D-manno-heptose 7-phosphate: step 1/4. It functions in the pathway nucleotide-sugar biosynthesis; ADP-L-glycero-beta-D-manno-heptose biosynthesis; ADP-L-glycero-beta-D-manno-heptose from D-glycero-beta-D-manno-heptose 7-phosphate: step 3/4. In terms of biological role, catalyzes the phosphorylation of D-glycero-D-manno-heptose 7-phosphate at the C-1 position to selectively form D-glycero-beta-D-manno-heptose-1,7-bisphosphate. Catalyzes the ADP transfer from ATP to D-glycero-beta-D-manno-heptose 1-phosphate, yielding ADP-D-glycero-beta-D-manno-heptose. The polypeptide is Bifunctional protein HldE (Pseudomonas putida (strain W619)).